The following is a 161-amino-acid chain: Phosphopantetheine adenylyltransferase (161 aa).

A substrate-binding site is contributed by serine 9. Residues 9 to 10 (SF) and histidine 17 contribute to the ATP site. The substrate site is built by lysine 41, threonine 74, and arginine 88. ATP-binding positions include 89–91 (GVR), glutamate 99, and 124–130 (NSFVASS).

This sequence belongs to the bacterial CoaD family. As to quaternary structure, homohexamer. Mg(2+) is required as a cofactor.

It is found in the cytoplasm. It catalyses the reaction (R)-4'-phosphopantetheine + ATP + H(+) = 3'-dephospho-CoA + diphosphate. It functions in the pathway cofactor biosynthesis; coenzyme A biosynthesis; CoA from (R)-pantothenate: step 4/5. Its function is as follows. Reversibly transfers an adenylyl group from ATP to 4'-phosphopantetheine, yielding dephospho-CoA (dPCoA) and pyrophosphate. The sequence is that of Phosphopantetheine adenylyltransferase from Lactobacillus acidophilus (strain ATCC 700396 / NCK56 / N2 / NCFM).